Consider the following 2467-residue polypeptide: Transcription factor TFIIIB component B'' homolog (2467 aa).

Disordered stretches follow at residues 1–145 (MFRR…RYRI) and 159–243 (LRKE…VDDG). Residues 1–301 (MFRRARLSVK…TYSSFRKNYY (301 aa)) form an interaction with ZBTB43 region. Low complexity predominate over residues 81–92 (AAESSTLSSASS). The span at 99 to 118 (SSTSSLVQPSGSAPSQSRPL) shows a compositional bias: polar residues. Composition is skewed to basic and acidic residues over residues 133–144 (AKEKQPCSDRYR) and 177–186 (RPPDRSKMTM). Residues 144–177 (RIYKARKLREMLKEELRKEKKQWKNKFSTNESQR) adopt a coiled-coil conformation. A compositionally biased stretch (acidic residues) spans 231–242 (NDNEDVEEEVDD). In terms of domain architecture, Myb-like spans 297 to 347 (RKNYYSKPWSNKETDMFFLAISMVGTDFSMIGQLFPHRARIEIKNKFKREE). The tract at residues 357–472 (AFQEKRPFDF…QEKKRRRNQG (116 aa)) is required for phosphorylation by CSNK2A1. Disordered stretches follow at residues 380 to 513 (EEKR…ECNK), 576 to 720 (SADM…VKAA), 748 to 844 (PPQT…PATW), 866 to 893 (LTATASTKDSESDVKDSGRNDTASNAEM), 971 to 1200 (LQEN…SSKI), 1231 to 1270 (LGRHETDQGMPLPDALERFSDTNLSKPLPQEQQPLQVKPA), 1318 to 1388 (DSDQ…LVPI), 1409 to 1448 (LPVRGRLQRPRPNVQKARQRQIVEKGEARDIAKNEGPELQ), 1527 to 1561 (KAKPNLGGARRKDEQPGVEKGRTDESTALTAEDHL), 1592 to 1706 (IHSE…RASK), 1902 to 1926 (IVSKEQSNRDAAVEEEAVEETLPTR), 1977 to 2014 (IQRETEGDDSKAVELEDKSHAPVTAAETKEEEQSQCVG), 2058 to 2083 (LDSGQSFGESAAKEALKETPKGSDVP), 2179 to 2206 (LVVQDAPSLSPSRSGSSEKPPANLDLTS), 2260 to 2290 (GIFPTSESTHATSKPQKEHSEPTDTGSSGSL), and 2304 to 2449 (LPQS…EEVT). A coiled-coil region spans residues 458–487 (EQDQNQEKKRRRNQGEANKQEATNLLERVL). The segment covering 649-660 (AAEKNHMEKETM) has biased composition (basic and acidic residues). Residues 809-824 (RFQKPKPNTGRRRRRI) are compositionally biased toward basic residues. Basic and acidic residues-rich tracts occupy residues 873 to 884 (KDSESDVKDSGR), 992 to 1002 (TGKDLAMKEST), 1009 to 1041 (TEEREAYSEETERQEKISALIKDAEEAKARGEM), 1089 to 1098 (EGKELNLRET), 1112 to 1130 (EKTDIEETNGDPKETERES), and 1150 to 1170 (DLGKPEKIDVAPREREPEEHS). Composition is skewed to polar residues over residues 1180–1200 (LSSSDGSTGSPQDKVNISSKI), 1251–1265 (DTNLSKPLPQEQQPL), 1318–1330 (DSDQAALSPQHNV), and 1364–1382 (PPNSSEPKEGSQLTPNQEN). Composition is skewed to basic and acidic residues over residues 1429 to 1448 (QIVEKGEARDIAKNEGPELQ), 1536 to 1561 (RRKDEQPGVEKGRTDESTALTAEDHL), and 1592 to 1603 (IHSEESGSDRND). Polar residues-rich tracts occupy residues 1621-1642 (EQPTSLGLEEQSLSKQIRSSCP) and 1650-1665 (YPKTVSSRRTPLSSAS). Residues 1688–1697 (RGSKRIRGKT) are compositionally biased toward basic residues. 3 stretches are compositionally biased toward basic and acidic residues: residues 1902–1913 (IVSKEQSNRDAA), 1977–1996 (IQRETEGDDSKAVELEDKSH), and 2068–2078 (AAKEALKETPK). The span at 2185 to 2199 (PSLSPSRSGSSEKPP) shows a compositional bias: low complexity. Composition is skewed to polar residues over residues 2262-2273 (FPTSESTHATSK), 2319-2334 (PASNSEQRDIVTSSSK), and 2414-2429 (TAGSPESSAAQVSSDQ).

As to quaternary structure, component of TFIIIB complex. The TFIIIB complex has two activities, alpha and beta. The TFIIIB-alpha and TFIIIB-beta activities are required for transcription of genes with TFIIIC-bound internal promoters and PSE transcription factor-bound external promoters, respectively. The TFIIIB-alpha activity complex is composed of TBP, BDP1, and a complex containing both BRF2 and at least four stably associated proteins; YY1 facilitates the formation of TFIIIB-alpha activity complex. The TFIIIB-beta activity complex is composed of TBP, BDP1, and BRF1. Interacts with BRF1; this interaction diminishes during mitosis resulting in the release of BDP1 from chromosomal templates. Component of TFIIIC complex. The TFIIIC complex has two activities, C1 and C2. The TFIIIC2 activity complex is only required for transcription of the 'classical' pol III genes whereas the TFIIIC1 activity complex is required for transcription of all pol III genes. The TFIIIC1 activity complex is composed at least of BDP1. Interacts with ZBTB43. In terms of processing, phosphorylated by CSNK2A1 during mitosis, resulting in its release from chromatin and suppression of polymerase III transcription. In terms of tissue distribution, expressed in the cochlea, particularly in the spiral ligament, the capillaries of the stria vascularis and the basilar membrane.

The protein resides in the nucleus. Functionally, general activator of RNA polymerase III transcription. Requires for transcription from all three types of polymerase III promoters. Requires for transcription of genes with internal promoter elements and with promoter elements upstream of the initiation site. The sequence is that of Transcription factor TFIIIB component B'' homolog (Bdp1) from Mus musculus (Mouse).